The primary structure comprises 217 residues: Thymidylate kinase (217 aa).

Gly7–Ser14 is a binding site for ATP.

The protein belongs to the thymidylate kinase family.

It catalyses the reaction dTMP + ATP = dTDP + ADP. Functionally, phosphorylation of dTMP to form dTDP in both de novo and salvage pathways of dTTP synthesis. The chain is Thymidylate kinase from Pelodictyon phaeoclathratiforme (strain DSM 5477 / BU-1).